Consider the following 130-residue polypeptide: Biotin carboxyl carrier protein (130 aa).

The interval 20–64 (EISESSVPAATPITPTTENTRAASDQKQQSQTPSPAATASAANTM) is disordered. A compositionally biased stretch (polar residues) spans 23-46 (ESSVPAATPITPTTENTRAASDQK). Residues 47–64 (QQSQTPSPAATASAANTM) show a composition bias toward low complexity. The region spanning 55 to 130 (AATASAANTM…NAGDNLITIA (76 aa)) is the Biotinyl-binding domain. The residue at position 96 (K96) is an N6-biotinyllysine.

This is Biotin carboxyl carrier protein (bcc) from Streptococcus mutans serotype c (strain ATCC 700610 / UA159).